The primary structure comprises 479 residues: GMP reductase (479 aa).

2 CBS domains span residues 96 to 153 (VLDT…VRDI) and 154 to 212 (AVTD…ATDS). NADP(+)-binding positions include 246–248 (DTA) and 296–298 (GVG). C303 functions as the Thioimidate intermediate in the catalytic mechanism.

It belongs to the IMPDH/GMPR family. GuaB1 subfamily. Requires a monovalent cation as cofactor.

It catalyses the reaction IMP + NH4(+) + NADP(+) = GMP + NADPH + 2 H(+). It participates in purine metabolism; IMP biosynthesis via salvage pathway. Functionally, involved in the purine-salvage pathway. Catalyzes the NADPH-dependent conversion of GMP to IMP. This Mycobacterium bovis (strain ATCC BAA-935 / AF2122/97) protein is GMP reductase.